We begin with the raw amino-acid sequence, 331 residues long: Flavonol synthase 1 (331 aa).

Residues 191–292 (DAIELLLKIN…RMSWPVFCSP (102 aa)) form the Fe2OG dioxygenase domain. Residues His-217, Asp-219, and His-273 each contribute to the Fe cation site. A 2-oxoglutarate-binding site is contributed by Arg-283.

Belongs to the iron/ascorbate-dependent oxidoreductase family. It depends on L-ascorbate as a cofactor. Fe(2+) serves as cofactor. In terms of tissue distribution, expressed in young cromes.

It catalyses the reaction a (2R,3R)-dihydroflavonol + 2-oxoglutarate + O2 = a flavonol + succinate + CO2 + H2O. It carries out the reaction (2R,3R)-dihydrokaempferol + 2-oxoglutarate + O2 = kaempferol + succinate + CO2 + H2O + H(+). The catalysed reaction is (2R,3R)-dihydroquercetin + 2-oxoglutarate + O2 = quercetin + succinate + CO2 + H2O + H(+). The enzyme catalyses (2R,3R)-dihydromyricetin + 2-oxoglutarate + O2 = myricetin + succinate + CO2 + H2O + H(+). It functions in the pathway flavonoid metabolism. In terms of biological role, catalyzes the formation of flavonols from dihydroflavonols. Can act on dihydrokaempferol to produce kaempferol, on dihydroquercetin to produce quercitin and on dihydromyricetin to produce myricetin. This is Flavonol synthase 1 from Crocosmia x crocosmiiflora (Montbretia).